The sequence spans 873 residues: Zinc fingers and homeoboxes protein 1 (873 aa).

Positions 24 to 63 (LISDLDEGPPVLTPVENTRAESISSDEEVHESVDSDNQQN) are disordered. Thr36 is modified (phosphothreonine). Residues Ser45, Ser47, and Ser48 each carry the phosphoserine modification. C2H2-type zinc fingers lie at residues 70-93 (YECK…DSEH) and 102-125 (YVCV…LKYH). A Glycyl lysine isopeptide (Lys-Gly) (interchain with G-Cter in SUMO2) cross-link involves residue Lys159. Positions 198–236 (VHHNSVEDVPEEKENEIKPDREETVENPSSSASESNTST) are disordered. Residue Ser202 is modified to Phosphoserine. The span at 212 to 221 (NEIKPDREET) shows a compositional bias: basic and acidic residues. Low complexity predominate over residues 223–236 (ENPSSSASESNTST). The interval 272-432 (NSNLIPKVLI…QNNVQKSQVP (161 aa)) is required for dimerization. The segment at 272–564 (NSNLIPKVLI…VQPKQSWNPF (293 aa)) is required for interaction with NFYA. The segment at residues 284–346 (NSIPTYNAAL…LKHGVSWTPE (63 aa)) is a DNA-binding region (homeobox 1). The segment at 431–454 (VPAAQPTAETKPATAAVPTSQSVK) is disordered. Glycyl lysine isopeptide (Lys-Gly) (interchain with G-Cter in SUMO2) cross-links involve residues Lys441, Lys454, and Lys485. Positions 464-526 (SFGIRAKKTK…YNQRNSKSNQ (63 aa)) form a DNA-binding region, homeobox 2. Disordered regions lie at residues 544–563 (DETT…SWNP), 626–668 (KEEK…CKKT), and 732–769 (SSMN…INNW). Over residues 550-562 (PTVGTVQPKQSWN) the composition is skewed to polar residues. Positions 569 to 630 (PQKFKEKTAE…KSKALKEEKM (62 aa)) form a DNA-binding region, homeobox 3. A Glycyl lysine isopeptide (Lys-Gly) (interchain with G-Cter in SUMO2) cross-link involves residue Lys629. Ser648 carries the phosphoserine modification. Positions 660–722 (STGKICKKTP…YAWKNGNLKW (63 aa)) form a DNA-binding region, homeobox 4. The interval 734–768 (MNGLSSLRKRGRGRPKGRGRGRPRGRPRGSKRINN) is required for nuclear localization. The span at 740 to 764 (LRKRGRGRPKGRGRGRPRGRPRGSK) shows a compositional bias: basic residues. A Phosphoserine modification is found at Ser774. The homeobox 5 DNA-binding region spans 777–832 (KFKTGTAILKDYYLKHKFLNEQDLDELVNKSHMGYEQVREWFAERQRRSELGIELF). The interval 829–873 (IELFEENEEEDEVIDDQEEDEEETDDSDTWEPPRHVKRKLSKSDD) is disordered. The span at 831-857 (LFEENEEEDEVIDDQEEDEEETDDSDT) shows a compositional bias: acidic residues. The required for repressor activity stretch occupies residues 831 to 873 (LFEENEEEDEVIDDQEEDEEETDDSDTWEPPRHVKRKLSKSDD). Residues 863 to 873 (HVKRKLSKSDD) show a composition bias toward basic residues.

Belongs to the ZHX family. In terms of assembly, forms homodimers. Heterodimer (via HD1 domain) with ZHX2 (via HD1 domain). Also forms a heterodimer with ZHX3 which is a prerequisite for repressor activity. Interacts with ATF7IP and NFYA. Interacts (via homeobox domains) with DNMT3B (via PWWP domain).

It is found in the nucleus. Functionally, acts as a transcriptional repressor. Increases DNMT3B-mediated repressive transcriptional activity when DNMT3B is tethered to DNA. May link molecule between DNMT3B and other co-repressor proteins. The chain is Zinc fingers and homeoboxes protein 1 (ZHX1) from Pongo pygmaeus (Bornean orangutan).